Reading from the N-terminus, the 356-residue chain is MRVYPTFFKLAFSWMDAERAHTLGFKGIRLAHATGAGRVLRKLTAPAPSLQTTAFGITFPSPFGLAAGFDKEGHGIEALTELGFGHVEVGTITGQAQPGNEQPRLFRLIEDRAVINRMGFNNDGAAAVAPRLKSARAALQRTYPAVRPVIGVNIGKTKVVELADAVDDYRISARTLAPAADYLVVNVSSPNTPGLRLLQDVETLRPLLTAVGEEADRAAGRHVPLLVKIAPDLSDEDIDDVARLALDLKLDGIIATNTTIARTGLASPAEKVEQCGAGGLSGAPLKKRSLEVLRRLKQATGDALTLIAVGGVETAQDVQDRLDAGATLVQGYTAFLYEGPFWAARINRQLARSRRS.

Residues 67-71 (AGFDK) and Thr91 each bind FMN. Substrate is bound at residue Lys71. Residue 116-120 (NRMGF) participates in substrate binding. Positions 153 and 186 each coordinate FMN. Asn186 provides a ligand contact to substrate. Ser189 functions as the Nucleophile in the catalytic mechanism. Asn191 contributes to the substrate binding site. Residues Lys228 and Thr256 each contribute to the FMN site. Position 257–258 (257–258 (NT)) interacts with substrate. Residues Gly282, Gly311, and 332 to 333 (YT) each bind FMN.

Belongs to the dihydroorotate dehydrogenase family. Type 2 subfamily. Monomer. FMN serves as cofactor.

Its subcellular location is the cell membrane. It carries out the reaction (S)-dihydroorotate + a quinone = orotate + a quinol. It participates in pyrimidine metabolism; UMP biosynthesis via de novo pathway; orotate from (S)-dihydroorotate (quinone route): step 1/1. In terms of biological role, catalyzes the conversion of dihydroorotate to orotate with quinone as electron acceptor. The protein is Dihydroorotate dehydrogenase (quinone) of Pseudarthrobacter chlorophenolicus (strain ATCC 700700 / DSM 12829 / CIP 107037 / JCM 12360 / KCTC 9906 / NCIMB 13794 / A6) (Arthrobacter chlorophenolicus).